The chain runs to 346 residues: Protein farnesyltransferase/geranylgeranyltransferase type-1 subunit alpha (346 aa).

PFTA repeat units lie at residues 59–93, 94–128, 130–164, 165–198, and 205–239; these read RSTR…ALGV, DLRE…KLGA, AVTN…ALGG, WEDE…RSPL, and MREL…NDTQ.

Belongs to the protein prenyltransferase subunit alpha family. In terms of assembly, heterodimer of an alpha and a beta subunit. Requires Mg(2+) as cofactor.

The catalysed reaction is L-cysteinyl-[protein] + (2E,6E)-farnesyl diphosphate = S-(2E,6E)-farnesyl-L-cysteinyl-[protein] + diphosphate. The enzyme catalyses geranylgeranyl diphosphate + L-cysteinyl-[protein] = S-geranylgeranyl-L-cysteinyl-[protein] + diphosphate. Its function is as follows. Essential subunit of both the farnesyltransferase and the geranylgeranyltransferase complex. Contributes to the transfer of a farnesyl or geranylgeranyl moiety from farnesyl or geranylgeranyl diphosphate to a cysteine at the fourth position from the C-terminus of several proteins having the C-terminal sequence Cys-aliphatic-aliphatic-X. The chain is Protein farnesyltransferase/geranylgeranyltransferase type-1 subunit alpha (FTA) from Solanum lycopersicum (Tomato).